A 253-amino-acid chain; its full sequence is Ubiquinone/menaquinone biosynthesis C-methyltransferase UbiE (253 aa).

S-adenosyl-L-methionine contacts are provided by residues Thr-76, Asp-97, and Asn-125–Ala-126.

It belongs to the class I-like SAM-binding methyltransferase superfamily. MenG/UbiE family.

It catalyses the reaction a 2-demethylmenaquinol + S-adenosyl-L-methionine = a menaquinol + S-adenosyl-L-homocysteine + H(+). The catalysed reaction is a 2-methoxy-6-(all-trans-polyprenyl)benzene-1,4-diol + S-adenosyl-L-methionine = a 5-methoxy-2-methyl-3-(all-trans-polyprenyl)benzene-1,4-diol + S-adenosyl-L-homocysteine + H(+). It participates in quinol/quinone metabolism; menaquinone biosynthesis; menaquinol from 1,4-dihydroxy-2-naphthoate: step 2/2. Its pathway is cofactor biosynthesis; ubiquinone biosynthesis. Functionally, methyltransferase required for the conversion of demethylmenaquinol (DMKH2) to menaquinol (MKH2) and the conversion of 2-polyprenyl-6-methoxy-1,4-benzoquinol (DDMQH2) to 2-polyprenyl-3-methyl-6-methoxy-1,4-benzoquinol (DMQH2). The chain is Ubiquinone/menaquinone biosynthesis C-methyltransferase UbiE from Bradyrhizobium diazoefficiens (strain JCM 10833 / BCRC 13528 / IAM 13628 / NBRC 14792 / USDA 110).